We begin with the raw amino-acid sequence, 145 residues long: D-aminoacyl-tRNA deacylase (145 aa).

The Gly-cisPro motif, important for rejection of L-amino acids signature appears at 137 to 138 (GP).

Belongs to the DTD family. As to quaternary structure, homodimer.

The protein localises to the cytoplasm. The enzyme catalyses glycyl-tRNA(Ala) + H2O = tRNA(Ala) + glycine + H(+). It catalyses the reaction a D-aminoacyl-tRNA + H2O = a tRNA + a D-alpha-amino acid + H(+). Its function is as follows. An aminoacyl-tRNA editing enzyme that deacylates mischarged D-aminoacyl-tRNAs. Also deacylates mischarged glycyl-tRNA(Ala), protecting cells against glycine mischarging by AlaRS. Acts via tRNA-based rather than protein-based catalysis; rejects L-amino acids rather than detecting D-amino acids in the active site. By recycling D-aminoacyl-tRNA to D-amino acids and free tRNA molecules, this enzyme counteracts the toxicity associated with the formation of D-aminoacyl-tRNA entities in vivo and helps enforce protein L-homochirality. In Pseudomonas putida (strain GB-1), this protein is D-aminoacyl-tRNA deacylase.